Here is a 240-residue protein sequence, read N- to C-terminus: Cysteine-rich venom protein (240 aa).

Positions 1 to 19 (MIAFIVLPILAAVLQQSSG) are cleaved as a signal peptide. The region spanning 39 to 166 (DLHNSLRRSV…EYSYFYVCQY (128 aa)) is the SCP domain. 8 cysteine pairs are disulfide-bonded: cysteine 75-cysteine 153, cysteine 92-cysteine 167, cysteine 148-cysteine 164, cysteine 186-cysteine 193, cysteine 189-cysteine 198, cysteine 202-cysteine 235, cysteine 211-cysteine 229, and cysteine 220-cysteine 233. One can recognise a ShKT domain in the interval 202 to 235 (CRQENKFTNCDSLVRQSSCQDNYMKTNCPASCFC).

Belongs to the CRISP family. As to expression, expressed by the venom gland.

It is found in the secreted. In terms of biological role, blocks contraction of smooth muscle elicited by high potassium-induced depolarization, but does not block caffeine-stimulated contraction. May target voltage-gated calcium channels on smooth muscle. The chain is Cysteine-rich venom protein from Protobothrops jerdonii (Jerdon's pitviper).